A 119-amino-acid polypeptide reads, in one-letter code: Ribosome-binding factor A (119 aa).

This sequence belongs to the RbfA family. In terms of assembly, monomer. Binds 30S ribosomal subunits, but not 50S ribosomal subunits or 70S ribosomes.

It is found in the cytoplasm. Its function is as follows. One of several proteins that assist in the late maturation steps of the functional core of the 30S ribosomal subunit. Associates with free 30S ribosomal subunits (but not with 30S subunits that are part of 70S ribosomes or polysomes). Required for efficient processing of 16S rRNA. May interact with the 5'-terminal helix region of 16S rRNA. This chain is Ribosome-binding factor A, found in Ligilactobacillus salivarius (strain UCC118) (Lactobacillus salivarius).